A 188-amino-acid chain; its full sequence is Dual specificity protein phosphatase 18 (188 aa).

One can recognise a Tyrosine-protein phosphatase domain in the interval 19 to 160 (GLSQITKSLF…LIHYELQLFG (142 aa)). The tract at residues 95–141 (MQKGRTLLHCAAGVSRSAALCLAYLMKYHAMSLVDAHTWTKSCRPII) is sufficient for mitochondrial localization. The Phosphocysteine intermediate role is filled by Cys104.

Belongs to the protein-tyrosine phosphatase family. Non-receptor class dual specificity subfamily.

It is found in the cytoplasm. The protein resides in the nucleus. The protein localises to the mitochondrion inner membrane. It carries out the reaction O-phospho-L-tyrosyl-[protein] + H2O = L-tyrosyl-[protein] + phosphate. The catalysed reaction is O-phospho-L-seryl-[protein] + H2O = L-seryl-[protein] + phosphate. It catalyses the reaction O-phospho-L-threonyl-[protein] + H2O = L-threonyl-[protein] + phosphate. Functionally, can dephosphorylate single and diphosphorylated synthetic MAPK peptides, with preference for the phosphotyrosine and diphosphorylated forms over phosphothreonine. In vitro, dephosphorylates p-nitrophenyl phosphate (pNPP). The chain is Dual specificity protein phosphatase 18 (Dusp18) from Mus musculus (Mouse).